The chain runs to 378 residues: Mannitol-1-phosphate 5-dehydrogenase (378 aa).

4-15 serves as a coordination point for NAD(+); that stretch reads SVHFGAGNIGRG.

This sequence belongs to the mannitol dehydrogenase family.

The catalysed reaction is D-mannitol 1-phosphate + NAD(+) = beta-D-fructose 6-phosphate + NADH + H(+). The chain is Mannitol-1-phosphate 5-dehydrogenase from Streptococcus pneumoniae (strain Hungary19A-6).